The sequence spans 183 residues: ADP-ribosylation factor-like protein 1 (183 aa).

A lipid anchor (N-myristoyl glycine) is attached at Gly2. GTP-binding positions include 25–32 (GLDGAGKT), 68–72 (DLGGQ), and 127–130 (NKQD).

This sequence belongs to the small GTPase superfamily. Arf family. In terms of assembly, homodimer. Interacts with IMH1 (via GRIP domain); the interaction is dependent on GTP. Interacts with MON2.

Its subcellular location is the golgi apparatus. Functionally, recruits golgins such as IMH1 to the Golgi. Can bind and hydrolyze GTP. May be involved in trafficking events within the endosomal system. This chain is ADP-ribosylation factor-like protein 1 (ARL1), found in Saccharomyces cerevisiae (strain ATCC 204508 / S288c) (Baker's yeast).